Here is a 122-residue protein sequence, read N- to C-terminus: Small ribosomal subunit protein uS13 (122 aa).

The interval 96-122 (LPVHGQRTKTNARTRKGPARTVAGKKK) is disordered.

Belongs to the universal ribosomal protein uS13 family. Part of the 30S ribosomal subunit. Forms a loose heterodimer with protein S19. Forms two bridges to the 50S subunit in the 70S ribosome.

Its function is as follows. Located at the top of the head of the 30S subunit, it contacts several helices of the 16S rRNA. In the 70S ribosome it contacts the 23S rRNA (bridge B1a) and protein L5 of the 50S subunit (bridge B1b), connecting the 2 subunits; these bridges are implicated in subunit movement. Contacts the tRNAs in the A and P-sites. The sequence is that of Small ribosomal subunit protein uS13 from Geotalea daltonii (strain DSM 22248 / JCM 15807 / FRC-32) (Geobacter daltonii).